Reading from the N-terminus, the 328-residue chain is DNA-directed RNA polymerase subunit alpha (328 aa).

The alpha N-terminal domain (alpha-NTD) stretch occupies residues 1–231 (MIYQMQMPAK…EHVAFFADFS (231 aa)). The interval 252–328 (MRKLLNTKIE…MDITKYQMKG (77 aa)) is alpha C-terminal domain (alpha-CTD).

This sequence belongs to the RNA polymerase alpha chain family. Homodimer. The RNAP catalytic core consists of 2 alpha, 1 beta, 1 beta' and 1 omega subunit. When a sigma factor is associated with the core the holoenzyme is formed, which can initiate transcription.

The enzyme catalyses RNA(n) + a ribonucleoside 5'-triphosphate = RNA(n+1) + diphosphate. In terms of biological role, DNA-dependent RNA polymerase catalyzes the transcription of DNA into RNA using the four ribonucleoside triphosphates as substrates. The protein is DNA-directed RNA polymerase subunit alpha of Chlorobium phaeovibrioides (strain DSM 265 / 1930) (Prosthecochloris vibrioformis (strain DSM 265)).